We begin with the raw amino-acid sequence, 367 residues long: Aspartate beta-hydroxylase domain-containing protein 1 (367 aa).

Positions 1 to 27 (MWRGSSAGGSQGAAMEGTGGELGGQGN) are disordered. Residues 1 to 49 (MWRGSSAGGSQGAAMEGTGGELGGQGNWGLEDAPGLLARASLPIMPAWP) are Cytoplasmic-facing. The chain crosses the membrane as a helical span at residues 50–72 (LPLASSALTLLLGALTSLFLWYC). The Lumenal portion of the chain corresponds to 73-367 (YRLGSQDMQA…ALDFVFAPDP (295 aa)). The disordered stretch occupies residues 88–122 (RAGAVGGRPGGCSEAGRPSPGRSGESGEGPRTEGL). Residue Ser106 is modified to Phosphoserine.

Belongs to the aspartyl/asparaginyl beta-hydroxylase family.

The protein localises to the membrane. In Bos taurus (Bovine), this protein is Aspartate beta-hydroxylase domain-containing protein 1 (ASPHD1).